Consider the following 280-residue polypeptide: Succinate dehydrogenase [ubiquinone] iron-sulfur subunit, mitochondrial (280 aa).

The N-terminal 25 residues, 1-25 (MAAVCFSLSRCCSAVHRPAVTAVRF), are a transit peptide targeting the mitochondrion. The region spanning 39–129 (KKFQIYRWDP…TSKVTKIYPL (91 aa)) is the 2Fe-2S ferredoxin-type domain. 4 residues coordinate [2Fe-2S] cluster: Cys92, Cys97, Cys100, and Cys112. The 31-residue stretch at 175–205 (DRQKLDGLYECILCACCSTSCPSYWWNADKY) folds into the 4Fe-4S ferredoxin-type domain. [4Fe-4S] cluster contacts are provided by Cys185, Cys188, and Cys191. [3Fe-4S] cluster is bound at residue Cys195. Residue Trp200 participates in a ubiquinone binding. Residues Cys242 and Cys248 each coordinate [3Fe-4S] cluster. Cys252 is a binding site for [4Fe-4S] cluster.

It belongs to the succinate dehydrogenase/fumarate reductase iron-sulfur protein family. As to quaternary structure, component of complex II composed of four subunits: the flavoprotein (FP) sdha, iron-sulfur protein (IP) sdhb, and a cytochrome b composed of sdhc and sdhd. Requires [2Fe-2S] cluster as cofactor. [3Fe-4S] cluster is required as a cofactor. [4Fe-4S] cluster serves as cofactor.

The protein resides in the mitochondrion inner membrane. It catalyses the reaction a quinone + succinate = fumarate + a quinol. The catalysed reaction is (R)-malate + a quinone = enol-oxaloacetate + a quinol. The enzyme catalyses (S)-malate + a quinone = enol-oxaloacetate + a quinol. It participates in carbohydrate metabolism; tricarboxylic acid cycle; fumarate from succinate (eukaryal route): step 1/1. Its activity is regulated as follows. Enol-oxaloacetate inhibits the succinate dehydrogenase activity. Functionally, iron-sulfur protein (IP) subunit of the succinate dehydrogenase complex (mitochondrial respiratory chain complex II), responsible for transferring electrons from succinate to ubiquinone (coenzyme Q). SDH also oxidizes malate to the non-canonical enol form of oxaloacetate, enol-oxaloacetate. Enol-oxaloacetate, which is a potent inhibitor of the succinate dehydrogenase activity, is further isomerized into keto-oxaloacetate. This is Succinate dehydrogenase [ubiquinone] iron-sulfur subunit, mitochondrial (sdhb) from Danio rerio (Zebrafish).